Reading from the N-terminus, the 354-residue chain is UDP-N-acetylglucosamine--N-acetylmuramyl-(pentapeptide) pyrophosphoryl-undecaprenol N-acetylglucosamine transferase (354 aa).

UDP-N-acetyl-alpha-D-glucosamine is bound by residues 15-17, Asn-127, Arg-163, Ser-191, Ile-244, 263-268, and Gln-288; these read TGG and ALTVSE.

The protein belongs to the glycosyltransferase 28 family. MurG subfamily.

It localises to the cell inner membrane. The catalysed reaction is di-trans,octa-cis-undecaprenyl diphospho-N-acetyl-alpha-D-muramoyl-L-alanyl-D-glutamyl-meso-2,6-diaminopimeloyl-D-alanyl-D-alanine + UDP-N-acetyl-alpha-D-glucosamine = di-trans,octa-cis-undecaprenyl diphospho-[N-acetyl-alpha-D-glucosaminyl-(1-&gt;4)]-N-acetyl-alpha-D-muramoyl-L-alanyl-D-glutamyl-meso-2,6-diaminopimeloyl-D-alanyl-D-alanine + UDP + H(+). It functions in the pathway cell wall biogenesis; peptidoglycan biosynthesis. Functionally, cell wall formation. Catalyzes the transfer of a GlcNAc subunit on undecaprenyl-pyrophosphoryl-MurNAc-pentapeptide (lipid intermediate I) to form undecaprenyl-pyrophosphoryl-MurNAc-(pentapeptide)GlcNAc (lipid intermediate II). The sequence is that of UDP-N-acetylglucosamine--N-acetylmuramyl-(pentapeptide) pyrophosphoryl-undecaprenol N-acetylglucosamine transferase from Vibrio cholerae serotype O1 (strain ATCC 39541 / Classical Ogawa 395 / O395).